The sequence spans 560 residues: Protein tweety homolog 3 (560 aa).

Topologically, residues 1 to 43 are extracellular; sequence MAAVVNYSPPWWVNLFHRLPHFNLQFQQTSSDFRPDDSDYQKA. Residues 44 to 64 form a helical membrane-spanning segment; it reads VLLLGAAALVCLALDLLFLLF. Over 65–87 the chain is Cytoplasmic; that stretch reads YSFWLCCCRRKNHDSPNADCCCT. A helical transmembrane segment spans residues 88–108; it reads AWCVIIATLVCSAGIAVGFYG. The Extracellular segment spans residues 109–212; the sequence is NGETCDGVTR…TEQYDWYRWL (104 aa). Ca(2+)-binding residues include glutamate 111 and aspartate 114. N-linked (GlcNAc...) asparagine glycans are attached at residues asparagine 127 and asparagine 145. The chain crosses the membrane as a helical span at residues 213-233; sequence GYLGLLLFDVIICLLVLVGLI. Residues 234-238 lie on the Cytoplasmic side of the membrane; the sequence is RNSRS. The helical transmembrane segment at 239–259 threads the bilayer; the sequence is ILIGVCFLGVLTLVISWASLG. Residues 260–387 are Extracellular-facing; it reads LEFSFAVGAS…LTGLCYDGVE (128 aa). 2 cysteine pairs are disulfide-bonded: cysteine 272-cysteine 382 and cysteine 300-cysteine 367. Asparagine 352 is a glycosylation site (N-linked (GlcNAc...) asparagine). The helical transmembrane segment at 388–408 threads the bilayer; it reads GLIYLVLFSFVTALMFSSIVC. The Cytoplasmic portion of the chain corresponds to 409-560; the sequence is SVPHTWQSKR…AIHRPHSAIH (152 aa). Disordered stretches follow at residues 415–435 and 486–560; these read QSKR…GSRA and TPRC…SAIH. Over residues 539–549 the composition is skewed to polar residues; the sequence is TSRSAPNSRPN.

This sequence belongs to the tweety family. Homotetramer; disulfide-linked. Forms cis-homodimers in the presence of Ca(2+).

It is found in the cell membrane. The enzyme catalyses chloride(in) = chloride(out). The catalysed reaction is L-glutamate(out) = L-glutamate(in). Functionally, may act as a calcium-independent, swelling-dependent volume-regulated anion channel (VRAC-swell) which plays a pivotal role in the process of regulatory volume decrease (RVD) in the brain through the efflux of anions like chloride and organic osmolytes like glutamate. Probable large-conductance Ca(2+)-activated chloride channel. The polypeptide is Protein tweety homolog 3 (ttyh3b) (Danio rerio (Zebrafish)).